The primary structure comprises 438 residues: Putative hydroxypyruvate reductase (438 aa).

The catalysed reaction is (R)-glycerate + NAD(+) = 3-hydroxypyruvate + NADH + H(+). It carries out the reaction (R)-glycerate + NADP(+) = 3-hydroxypyruvate + NADPH + H(+). Its pathway is carbohydrate acid metabolism; tartrate degradation; 3-hydroxypyruvate from D-glycerate: step 1/1. Functionally, degrades an unidentified toxic product from the first step of tartrate degradation. This is Putative hydroxypyruvate reductase (ttuD) from Agrobacterium vitis (Rhizobium vitis).